The following is a 145-amino-acid chain: AP-2 complex subunit sigma (145 aa).

The protein belongs to the adaptor complexes small subunit family. In terms of assembly, adaptor protein complex 2 (AP-2) is a heterotetramer composed of two large adaptins (alpha-type subunit apl3 and beta-type subunit apl1), a medium chain (mu-type subunit apm4) and a small adaptin (sigma-type subunit aps2).

The protein resides in the cell membrane. It is found in the membrane. It localises to the coated pit. Functionally, component of the adaptor complexes which link clathrin to receptors in coated vesicles. Clathrin-associated protein complexes are believed to interact with the cytoplasmic tails of membrane proteins, leading to their selection and concentration. The chain is AP-2 complex subunit sigma (aps2) from Emericella nidulans (strain FGSC A4 / ATCC 38163 / CBS 112.46 / NRRL 194 / M139) (Aspergillus nidulans).